The primary structure comprises 93 residues: Exodeoxyribonuclease 7 small subunit (93 aa).

The tract at residues 1 to 22 (MAKTASPGATPPGNGAEPLPDN) is disordered.

It belongs to the XseB family. In terms of assembly, heterooligomer composed of large and small subunits.

It is found in the cytoplasm. The enzyme catalyses Exonucleolytic cleavage in either 5'- to 3'- or 3'- to 5'-direction to yield nucleoside 5'-phosphates.. Bidirectionally degrades single-stranded DNA into large acid-insoluble oligonucleotides, which are then degraded further into small acid-soluble oligonucleotides. This is Exodeoxyribonuclease 7 small subunit from Burkholderia multivorans (strain ATCC 17616 / 249).